A 589-amino-acid polypeptide reads, in one-letter code: NADP-dependent malic enzyme (589 aa).

The active-site Proton donor is the Tyr-137. Arg-190 is an NAD(+) binding site. Lys-208 serves as the catalytic Proton acceptor. Positions 280, 281, and 304 each coordinate a divalent metal cation. Asp-304 contributes to the NAD(+) binding site. Residue 333–349 participates in NADP(+) binding; sequence LFLGAGEAGTGIAELIA. Residue Asn-445 participates in NAD(+) binding.

It belongs to the malic enzymes family. In terms of assembly, homotetramer. Mg(2+) is required as a cofactor. Requires Mn(2+) as cofactor.

The protein localises to the cytoplasm. The enzyme catalyses (S)-malate + NADP(+) = pyruvate + CO2 + NADPH. It catalyses the reaction oxaloacetate + H(+) = pyruvate + CO2. The chain is NADP-dependent malic enzyme (ME1) from Phaseolus vulgaris (Kidney bean).